Reading from the N-terminus, the 629-residue chain is MASIPEKQALILPLFEKLTSLTKETPPRAQWDPRLAGVGVLPRGTLFSCFHEKHLLEATKLFKVLYSPESFNDFLQLAREARVVVNEGLFAYAFSVAVIHRDDCKGVTLPPIQEVFPDRFVPSETINLAMKEAKNDPNSDIVVDVQETGNILDPEYKLAYFREDIGANAHHWYWHVVYPANWDAVFTGKTKDRKGELFYYMHQQMCARYDCERLSNGLTRMIPFHNFKEKLEGYAPHLTSLVSGLHYASRPAGLCLRDLSELEVQDVERWRDRILDAYHLNHVHDRENNDVVLDAEHGADILGAIIESSSDSVNRRFYGSLHNWGHVMMARMTDPDRSFEENPGVMSDTSTSLRDPIFYRWHRFVDNIFQEYKATLPSYTADDLNFPGLRIVSVQVNAKSQNRVRTFLKQEELVLSHGINFGTEHTVKVHYNHLDHEPFSYTINVDNSSGAVKHATVRIFLGPKCDELGNILEPNEQRRLFIELDKFHKELGPGLNTINRNSVESNVTVAHTYTFDELREGKLAPEDATEYCNCGWPRHMLIPKGTHRGMEFQLFVMLTDYTVDNPCGGAGKIVCADAVSYCGAKDQKYPDTKPMGFPFDRPTKIHTAEEILTPNMSLTDVVIQYVGHE.

The Cu cation site is built by His171, His175, His202, His322, His326, and His362. 2 N-linked (GlcNAc...) asparagine glycosylation sites follow: Asn447 and Asn506. An intrachain disulfide couples Cys534 to Cys582. Asn615 is a glycosylation site (N-linked (GlcNAc...) asparagine).

The protein belongs to the tyrosinase family. Hemocyanin subfamily. Tarantula hemocyanin is a 24-chain polymer with seven different chains identified. Hemolymph.

It is found in the secreted. Its subcellular location is the extracellular space. In terms of biological role, hemocyanins are copper-containing oxygen carriers occurring freely dissolved in the hemolymph of many mollusks and arthropods. This chain is Hemocyanin G chain (HCG), found in Aphonopelma sp. (American tarantula).